A 348-amino-acid polypeptide reads, in one-letter code: tRNA N6-adenosine threonylcarbamoyltransferase (348 aa).

2 residues coordinate Fe cation: H115 and H119. Substrate-binding positions include 138 to 142 (LVSGG), D171, G184, and N276. Residue D304 participates in Fe cation binding.

Belongs to the KAE1 / TsaD family. The cofactor is Fe(2+).

Its subcellular location is the cytoplasm. It catalyses the reaction L-threonylcarbamoyladenylate + adenosine(37) in tRNA = N(6)-L-threonylcarbamoyladenosine(37) in tRNA + AMP + H(+). In terms of biological role, required for the formation of a threonylcarbamoyl group on adenosine at position 37 (t(6)A37) in tRNAs that read codons beginning with adenine. Is involved in the transfer of the threonylcarbamoyl moiety of threonylcarbamoyl-AMP (TC-AMP) to the N6 group of A37, together with TsaE and TsaB. TsaD likely plays a direct catalytic role in this reaction. The sequence is that of tRNA N6-adenosine threonylcarbamoyltransferase from Xylella fastidiosa (strain M23).